The following is a 393-amino-acid chain: Beta-1,3-galactosyltransferase 7 (393 aa).

The chain crosses the membrane as a helical; Signal-anchor for type II membrane protein span at residues 9–29; the sequence is VISLKWVPFLCISFFALGAIF. Positions 89-112 are disordered; sequence SLDKSVSTLSSTRSSQEMVDGSET. Positions 93–103 are enriched in low complexity; that stretch reads SVSTLSSTRSS.

Belongs to the glycosyltransferase 31 family. Mn(2+) is required as a cofactor. In terms of tissue distribution, expressed in leaves, stems, flowers and siliques.

It is found in the golgi apparatus membrane. Its pathway is protein modification; protein glycosylation. Its function is as follows. Beta-1,3-galactosyltransferase that transfers galactose from UDP-galactose to substrates with a terminal glycosyl residue. This is Beta-1,3-galactosyltransferase 7 (B3GALT7) from Arabidopsis thaliana (Mouse-ear cress).